The primary structure comprises 467 residues: UTP--glucose-1-phosphate uridylyltransferase (467 aa).

UTP contacts are provided by residues 83–86 (LNGG), K97, Q160, and G189. Position 85–86 (85–86 (GG)) interacts with substrate. Substrate is bound by residues H190 and 218 to 220 (NSD). UTP is bound by residues D220 and K358.

The protein belongs to the UDPGP type 1 family.

The protein resides in the cytoplasm. The enzyme catalyses alpha-D-glucose 1-phosphate + UTP + H(+) = UDP-alpha-D-glucose + diphosphate. Its function is as follows. Plays a central role as a glucosyl donor in cellular metabolic pathways. This Musa acuminata (Banana) protein is UTP--glucose-1-phosphate uridylyltransferase (UGPA).